The primary structure comprises 30 residues: Kappa-sparatoxin-Hv1d (30 aa).

3 disulfide bridges follow: Cys-3-Cys-17, Cys-10-Cys-22, and Cys-16-Cys-26.

As to expression, expressed by the venom gland.

It localises to the secreted. Its function is as follows. Inhibitor of voltage-gated potassium channels of the Kv4/KCND family. Blocks calcium channels (Cav). This Heteropoda venatoria (Brown huntsman spider) protein is Kappa-sparatoxin-Hv1d.